The chain runs to 724 residues: Protein-glutamine gamma-glutamyltransferase 5 (724 aa).

Ala2 is modified (N-acetylalanine). Residues Cys283, His342, and Asp365 contribute to the active site. Asn405, Asp407, Glu453, and Glu458 together coordinate Ca(2+). Polar residues-rich tracts occupy residues 473 to 486 and 495 to 505; these read RSQGPHQANSNPFS and ARSPDSPSLQP. A disordered region spans residues 473-505; that stretch reads RSQGPHQANSNPFSSVPPRHNSARSPDSPSLQP.

Belongs to the transglutaminase superfamily. Transglutaminase family. Ca(2+) serves as cofactor.

Its subcellular location is the cytoplasm. The catalysed reaction is L-glutaminyl-[protein] + L-lysyl-[protein] = [protein]-L-lysyl-N(6)-5-L-glutamyl-[protein] + NH4(+). Functionally, catalyzes the cross-linking of proteins and the conjugation of polyamines to proteins. Contributes to the formation of the cornified cell envelope of keratinocytes. This chain is Protein-glutamine gamma-glutamyltransferase 5 (Tgm5), found in Mus musculus (Mouse).